Consider the following 396-residue polypeptide: Potassium channel subfamily K member 9 (396 aa).

The Cytoplasmic portion of the chain corresponds to Met1 to Thr8. Residues Leu9–Leu29 form a helical membrane-spanning segment. The Extracellular segment spans residues Glu30 to Ile88. An N-linked (GlcNAc...) asparagine glycan is attached at Asn53. An intramembrane region (pore-forming) is located at residues Thr89–Pro101. Positions 93, 94, 95, and 96 each coordinate K(+). The segment at Thr93–His98 is selectivity filter 1. Over Gly102–Lys107 the chain is Extracellular. Residues Ala108–Leu128 traverse the membrane as a helical segment. Residues Gly129–Asn158 lie on the Cytoplasmic side of the membrane. Residues Met159–Ser179 traverse the membrane as a helical segment. Topologically, residues Gln180–Phe194 are extracellular. Residues Ile195–Ala207 constitute an intramembrane region (pore-forming). Thr199, Ile200, Gly201, and Phe202 together coordinate K(+). Residues Thr199–Asp204 are selectivity filter 2. The Extracellular segment spans residues Leu208–Pro218. The helical transmembrane segment at Phe219–Leu239 threads the bilayer. The Cytoplasmic portion of the chain corresponds to Asn240–Ile396. The interval Val243–Thr248 is X-gate.

This sequence belongs to the two pore domain potassium channel (TC 1.A.1.8) family. Homodimer. Heterodimer with KCNK1. Heterodimer with KCNK3. Highly expressed in the CNS and at lower levels in the colon, kidney, liver, lung, spleen, stomach and skeletal muscle. The highest expression was found in the olfactory nuclei, piriform cortex, cerebellum, antedorsal thalmic nucleus, pontine nucleus, dorsal raphe and several nuclei in the medulla. Shows a non-homogeneous distribution in the hippocampus. Expressed at highest levels in the lateral posterior and inferior portions and at medium levels in neocortex. Expressed in motoneurons, including hypoglossal motoneurons (at protein level).

The protein localises to the cell membrane. It localises to the mitochondrion inner membrane. It is found in the cell projection. The protein resides in the dendrite. The enzyme catalyses K(+)(in) = K(+)(out). It carries out the reaction Na(+)(in) = Na(+)(out). With respect to regulation, activated by halothane and isoflurane. Inhibited by external acidification, diacylglycerol, anandamide and AGT/angiotensin II. Ruthenium red inhibits homomeric but not KCNK3:KCNK9 heteromeric channels. Functionally, k(+) channel that conducts voltage-dependent outward rectifying currents upon membrane depolarization. Voltage sensing is coupled to K(+) electrochemical gradient in an 'ion flux gating' mode where outward but not inward ion flow opens the gate. Changes ion selectivity and becomes permeable to Na(+) ions in response to extracellular acidification. Protonation of the pH sensor His-98 stabilizes C-type inactivation conformation likely converting the channel from outward K(+)-conducting, to inward Na(+)-conducting to nonconductive state. Homo- and heterodimerizes to form functional channels with distinct regulatory and gating properties. Allows K(+) currents with fast-gating kinetics important for the repolarization and hyperpolarization phases of action potentials. In granule neurons, hyperpolarizes the resting membrane potential to limit intrinsic neuronal excitability, but once the action potential threshold is reached, supports high-frequency action potential firing and increased neuronal excitability. Homomeric and/or heteromeric KCNK3:KCNK9 channels operate in cerebellar granule cells, whereas heteromeric KCNK1:KCNK9 enables currents in hippocampal dentate gyrus granule neurons. Dispensable for central chemosensory respiration i.e. breathing controlled by brainstem CO2/pH, it rather conducts pH-sensitive currents and controls the firing rate of serotonergic raphe neurons involved in potentiation of the respiratory chemoreflex. In retinal ganglion cells, mediates outward rectifying currents that regulate action potentials in response to acidification of the synaptic cleft. Involved in transmission of image-forming and nonimage-forming visual information in the retina. In adrenal gland, contributes to the maintenance of a hyperpolarized resting membrane potential of aldosterone-producing cells at zona glomerulosa and limits aldosterone release as part of a regulatory mechanism that controls arterial blood pressure and electrolyte homeostasis. The sequence is that of Potassium channel subfamily K member 9 from Rattus norvegicus (Rat).